The primary structure comprises 284 residues: Cytochrome P450 2C31 (284 aa).

Cysteine 229 is a heme binding site.

This sequence belongs to the cytochrome P450 family. Requires heme as cofactor.

It localises to the endoplasmic reticulum membrane. The protein localises to the microsome membrane. The enzyme catalyses an organic molecule + reduced [NADPH--hemoprotein reductase] + O2 = an alcohol + oxidized [NADPH--hemoprotein reductase] + H2O + H(+). In terms of biological role, cytochromes P450 are a group of heme-thiolate monooxygenases. In liver microsomes, this enzyme is involved in an NADPH-dependent electron transport pathway. It oxidizes a variety of structurally unrelated compounds, including steroids, fatty acids, and xenobiotics. The chain is Cytochrome P450 2C31 (CYP2C31) from Capra hircus aegagrus (Wild goat).